A 63-amino-acid chain; its full sequence is Large ribosomal subunit protein uL29 (63 aa).

This sequence belongs to the universal ribosomal protein uL29 family.

The chain is Large ribosomal subunit protein uL29 from Shewanella baltica (strain OS223).